A 614-amino-acid chain; its full sequence is Probable LRR receptor-like serine/threonine-protein kinase At5g45780 (614 aa).

Positions 1-26 are cleaved as a signal peptide; the sequence is MEISLMKFLFLGIWVYYYSVLDSVSA. Residues 27–242 are Extracellular-facing; the sequence is MDSLLSPKGV…NSKHHSLVLS (216 aa). 4 LRR repeats span residues 104-126, 128-151, 152-174, and 176-197; these read HLHT…LGQL, ELET…GFLT, HLNY…VAGL, and GLSF…ISAK. Asparagine 186, asparagine 193, and asparagine 224 each carry an N-linked (GlcNAc...) asparagine glycan. Residues 243–263 traverse the membrane as a helical segment; sequence FAFGIVVAFIISLMFLFFWVL. The Cytoplasmic portion of the chain corresponds to 264-614; it reads WHRSRLSRSH…IEAIELSGPR (351 aa). Threonine 297 bears the Phosphothreonine mark. Positions 300–576 constitute a Protein kinase domain; sequence FSPKNILGQG…QVLKVLEGLV (277 aa). Position 306-314 (306-314) interacts with ATP; sequence LGQGGFGMV. Threonine 323 is subject to Phosphothreonine. Lysine 328 is a binding site for ATP. Serine 380 is modified (phosphoserine). The active-site Proton acceptor is aspartate 426. A phosphothreonine mark is found at threonine 459, threonine 460, and threonine 465. At tyrosine 473 the chain carries Phosphotyrosine. Position 475 is a phosphoserine (serine 475). At threonine 476 the chain carries Phosphothreonine. Serine 480 carries the phosphoserine modification. Threonine 555 bears the Phosphothreonine mark.

It belongs to the protein kinase superfamily. Ser/Thr protein kinase family.

The protein localises to the membrane. It catalyses the reaction L-seryl-[protein] + ATP = O-phospho-L-seryl-[protein] + ADP + H(+). The catalysed reaction is L-threonyl-[protein] + ATP = O-phospho-L-threonyl-[protein] + ADP + H(+). In Arabidopsis thaliana (Mouse-ear cress), this protein is Probable LRR receptor-like serine/threonine-protein kinase At5g45780.